We begin with the raw amino-acid sequence, 244 residues long: Small ribosomal subunit protein uS2 (244 aa).

The protein belongs to the universal ribosomal protein uS2 family.

The sequence is that of Small ribosomal subunit protein uS2 from Desulforudis audaxviator (strain MP104C).